The sequence spans 275 residues: Nitrogenase iron protein 3 (275 aa).

Gly-9 to Ser-16 contacts ATP. Cys-97 contributes to the [4Fe-4S] cluster binding site. Arg-100 carries the ADP-ribosylarginine; by dinitrogenase reductase ADP-ribosyltransferase modification. Residue Cys-132 participates in [4Fe-4S] cluster binding.

Belongs to the NifH/BchL/ChlL family. In terms of assembly, homodimer. Requires [4Fe-4S] cluster as cofactor. Post-translationally, the reversible ADP-ribosylation of Arg-100 inactivates the nitrogenase reductase and regulates nitrogenase activity.

The catalysed reaction is N2 + 8 reduced [2Fe-2S]-[ferredoxin] + 16 ATP + 16 H2O = H2 + 8 oxidized [2Fe-2S]-[ferredoxin] + 2 NH4(+) + 16 ADP + 16 phosphate + 6 H(+). Its function is as follows. The key enzymatic reactions in nitrogen fixation are catalyzed by the nitrogenase complex, which has 2 components: the iron protein and the molybdenum-iron protein. The polypeptide is Nitrogenase iron protein 3 (nifH3) (Clostridium pasteurianum).